A 333-amino-acid polypeptide reads, in one-letter code: Holliday junction branch migration complex subunit RuvB (333 aa).

The interval 1–182 (MDERLLSGES…FGVLSRLEYY (182 aa)) is large ATPase domain (RuvB-L). ATP-binding positions include L21, R22, G63, K66, T67, T68, 129–131 (EDF), R172, Y182, and R219. T67 provides a ligand contact to Mg(2+). A small ATPAse domain (RuvB-S) region spans residues 183–253 (TVDQLSAIVE…ITQMALELLQ (71 aa)). Residues 256-333 (KLGLDHIDHK…EHFGMEMPKV (78 aa)) form a head domain (RuvB-H) region. Residues R311 and R316 each coordinate DNA.

It belongs to the RuvB family. As to quaternary structure, homohexamer. Forms an RuvA(8)-RuvB(12)-Holliday junction (HJ) complex. HJ DNA is sandwiched between 2 RuvA tetramers; dsDNA enters through RuvA and exits via RuvB. An RuvB hexamer assembles on each DNA strand where it exits the tetramer. Each RuvB hexamer is contacted by two RuvA subunits (via domain III) on 2 adjacent RuvB subunits; this complex drives branch migration. In the full resolvosome a probable DNA-RuvA(4)-RuvB(12)-RuvC(2) complex forms which resolves the HJ.

Its subcellular location is the cytoplasm. It carries out the reaction ATP + H2O = ADP + phosphate + H(+). Its function is as follows. The RuvA-RuvB-RuvC complex processes Holliday junction (HJ) DNA during genetic recombination and DNA repair, while the RuvA-RuvB complex plays an important role in the rescue of blocked DNA replication forks via replication fork reversal (RFR). RuvA specifically binds to HJ cruciform DNA, conferring on it an open structure. The RuvB hexamer acts as an ATP-dependent pump, pulling dsDNA into and through the RuvAB complex. RuvB forms 2 homohexamers on either side of HJ DNA bound by 1 or 2 RuvA tetramers; 4 subunits per hexamer contact DNA at a time. Coordinated motions by a converter formed by DNA-disengaged RuvB subunits stimulates ATP hydrolysis and nucleotide exchange. Immobilization of the converter enables RuvB to convert the ATP-contained energy into a lever motion, pulling 2 nucleotides of DNA out of the RuvA tetramer per ATP hydrolyzed, thus driving DNA branch migration. The RuvB motors rotate together with the DNA substrate, which together with the progressing nucleotide cycle form the mechanistic basis for DNA recombination by continuous HJ branch migration. Branch migration allows RuvC to scan DNA until it finds its consensus sequence, where it cleaves and resolves cruciform DNA. This chain is Holliday junction branch migration complex subunit RuvB, found in Bacillus mycoides (strain KBAB4) (Bacillus weihenstephanensis).